We begin with the raw amino-acid sequence, 100 residues long: Urease subunit gamma (100 aa).

It belongs to the urease gamma subunit family. Heterotrimer of UreA (gamma), UreB (beta) and UreC (alpha) subunits. Three heterotrimers associate to form the active enzyme.

The protein localises to the cytoplasm. It catalyses the reaction urea + 2 H2O + H(+) = hydrogencarbonate + 2 NH4(+). It participates in nitrogen metabolism; urea degradation; CO(2) and NH(3) from urea (urease route): step 1/1. The protein is Urease subunit gamma of Paraburkholderia phytofirmans (strain DSM 17436 / LMG 22146 / PsJN) (Burkholderia phytofirmans).